The chain runs to 1501 residues: Ribulose bisphosphate carboxylase (1501 aa).

N111 lines the substrate pocket. The Proton acceptor role is filled by K166. Residue K168 coordinates substrate. K191, D193, and E194 together coordinate Mg(2+). The residue at position 191 (K191) is an N6-carboxylysine. H287 acts as the Proton acceptor in catalysis. Residues R288, H321, and S368 each contribute to the substrate site. The propeptide at 486-508 (SAAAFVGASVAPAKKENVVARQA) is linker. N619 contributes to the substrate binding site. The active-site Proton acceptor is the K674. Substrate is bound at residue K676. Positions 699, 701, and 702 each coordinate Mg(2+). K699 is modified (N6-carboxylysine). Residue H795 is the Proton acceptor of the active site. Substrate is bound by residues R796, H829, and S876. Positions 994 to 1016 (SAAAFVGASVAPAKKENVVARQA) are cleaved as a propeptide — linker. N1127 lines the substrate pocket. The active-site Proton acceptor is the K1182. K1184 is a substrate binding site. Residues K1207, D1209, and E1210 each contribute to the Mg(2+) site. K1207 is modified (N6-carboxylysine). H1303 acts as the Proton acceptor in catalysis. Residues R1304, H1337, and S1384 each contribute to the substrate site.

It belongs to the RuBisCO large chain family. Type II subfamily. Homodimer. It depends on Mg(2+) as a cofactor.

The protein localises to the plastid. It localises to the chloroplast. The enzyme catalyses 2 (2R)-3-phosphoglycerate + 2 H(+) = D-ribulose 1,5-bisphosphate + CO2 + H2O. It catalyses the reaction D-ribulose 1,5-bisphosphate + O2 = 2-phosphoglycolate + (2R)-3-phosphoglycerate + 2 H(+). Its function is as follows. RuBisCO catalyzes two reactions: the carboxylation of D-ribulose 1,5-bisphosphate, the primary event in carbon dioxide fixation, as well as the oxidative fragmentation of the pentose substrate. Both reactions occur simultaneously and in competition at the same active site. In Symbiodinium sp. (Dinoflagellate), this protein is Ribulose bisphosphate carboxylase (rbcL).